A 103-amino-acid polypeptide reads, in one-letter code: Small ribosomal subunit protein uS10 (103 aa).

This sequence belongs to the universal ribosomal protein uS10 family. As to quaternary structure, part of the 30S ribosomal subunit.

Involved in the binding of tRNA to the ribosomes. The chain is Small ribosomal subunit protein uS10 from Cellvibrio japonicus (strain Ueda107) (Pseudomonas fluorescens subsp. cellulosa).